A 27-amino-acid polypeptide reads, in one-letter code: NGLCCSQYGFCGTTSQYCSRANGCQSN.

A Chitin-binding type-1 domain is found at 1 to 27 (NGLCCSQYGFCGTTSQYCSRANGCQSN). Cys-4 and Cys-18 are oxidised to a cystine.

As to expression, seeds (at protein level).

Its function is as follows. Chitin-binding protein which functions in defense against chitin-containing fungal pathogens. The polypeptide is Morintide mO5 (Moringa oleifera (Horseradish tree)).